Reading from the N-terminus, the 153-residue chain is MDASTKTKKGAGGRKGGGPRKKSVTRSIRAGLQFPVGRIGRYLKKGRYAQRVGTGAPVYLAAVLEYLAAEVLELAGNAARDNKKNRIIPRHVLLAVRNDEELGKLLAGVTIAHGGVLPNINPVLLPKKTERSNTVSKEPKSPKPKAGKSPKKA.

2 disordered regions span residues 1-24 and 127-153; these read MDASTKTKKGAGGRKGGGPRKKSV and KKTERSNTVSKEPKSPKPKAGKSPKKA. The span at 127 to 141 shows a compositional bias: basic and acidic residues; it reads KKTERSNTVSKEPKS. Residues 142-153 show a composition bias toward basic residues; that stretch reads PKPKAGKSPKKA. The SPKK motif motif lies at 149–152; the sequence is SPKK.

This sequence belongs to the histone H2A family. In terms of assembly, the nucleosome is a histone octamer containing two molecules each of H2A, H2B, H3 and H4 assembled in one H3-H4 heterotetramer and two H2A-H2B heterodimers. The octamer wraps approximately 147 bp of DNA.

The protein resides in the nucleus. Its subcellular location is the chromosome. Functionally, core component of nucleosome. Nucleosomes wrap and compact DNA into chromatin, limiting DNA accessibility to the cellular machineries which require DNA as a template. Histones thereby play a central role in transcription regulation, DNA repair, DNA replication and chromosomal stability. DNA accessibility is regulated via a complex set of post-translational modifications of histones, also called histone code, and nucleosome remodeling. This Medicago truncatula (Barrel medic) protein is Probable histone H2A.2.